The primary structure comprises 294 residues: Lipoyl synthase (294 aa).

7 residues coordinate [4Fe-4S] cluster: Cys35, Cys40, Cys46, Cys61, Cys65, Cys68, and Ser273. The region spanning 47–262 is the Radical SAM core domain; that stretch reads FRQRQATFLI…REQALSMGFE (216 aa).

This sequence belongs to the radical SAM superfamily. Lipoyl synthase family. It depends on [4Fe-4S] cluster as a cofactor.

The protein localises to the cytoplasm. It carries out the reaction [[Fe-S] cluster scaffold protein carrying a second [4Fe-4S](2+) cluster] + N(6)-octanoyl-L-lysyl-[protein] + 2 oxidized [2Fe-2S]-[ferredoxin] + 2 S-adenosyl-L-methionine + 4 H(+) = [[Fe-S] cluster scaffold protein] + N(6)-[(R)-dihydrolipoyl]-L-lysyl-[protein] + 4 Fe(3+) + 2 hydrogen sulfide + 2 5'-deoxyadenosine + 2 L-methionine + 2 reduced [2Fe-2S]-[ferredoxin]. Its pathway is protein modification; protein lipoylation via endogenous pathway; protein N(6)-(lipoyl)lysine from octanoyl-[acyl-carrier-protein]: step 2/2. Functionally, catalyzes the radical-mediated insertion of two sulfur atoms into the C-6 and C-8 positions of the octanoyl moiety bound to the lipoyl domains of lipoate-dependent enzymes, thereby converting the octanoylated domains into lipoylated derivatives. The chain is Lipoyl synthase from Geotalea daltonii (strain DSM 22248 / JCM 15807 / FRC-32) (Geobacter daltonii).